We begin with the raw amino-acid sequence, 424 residues long: Histone-binding protein RBBP7 (424 aa).

WD repeat units lie at residues 47–121, 127–172, 180–216, 227–268, 274–311, 317–368, and 375–402; these read QWLP…KINH, RARY…LRLR, GLSW…KIVD, VVED…HSVD, VNCL…LHSF, EIFQ…LFIH, and ISDF…IWQM. Residues 359–404 form an interaction with HAT1 region; the sequence is DGPPELLFIHGGHTAKISDFSWNPNEPWVICSVSEDNIMQIWQMAE.

The protein belongs to the WD repeat RBAP46/RBAP48/MSI1 family. In terms of assembly, binds directly to helix 1 of the histone fold of histone H4, a region that is not accessible when H4 is in chromatin. Also interacts with histone H2B and HAT1.

Its subcellular location is the nucleus. In terms of biological role, core histone-binding subunit that may target chromatin remodeling factors, histone acetyltransferases and histone deacetylases to their histone substrates in a manner that is regulated by nucleosomal DNA. Component of several complexes which regulate chromatin metabolism. This Gallus gallus (Chicken) protein is Histone-binding protein RBBP7 (RBBP7).